Consider the following 317-residue polypeptide: tRNA dimethylallyltransferase (317 aa).

Residue G14 to T21 participates in ATP binding. T16–T21 contacts substrate. Residues D39 to Q42 are interaction with substrate tRNA.

The protein belongs to the IPP transferase family. In terms of assembly, monomer. It depends on Mg(2+) as a cofactor.

The catalysed reaction is adenosine(37) in tRNA + dimethylallyl diphosphate = N(6)-dimethylallyladenosine(37) in tRNA + diphosphate. Functionally, catalyzes the transfer of a dimethylallyl group onto the adenine at position 37 in tRNAs that read codons beginning with uridine, leading to the formation of N6-(dimethylallyl)adenosine (i(6)A). This chain is tRNA dimethylallyltransferase, found in Bacillus cereus (strain ATCC 10987 / NRS 248).